The following is a 103-amino-acid chain: Large ribosomal subunit protein uL24 (103 aa).

It belongs to the universal ribosomal protein uL24 family. In terms of assembly, part of the 50S ribosomal subunit.

One of two assembly initiator proteins, it binds directly to the 5'-end of the 23S rRNA, where it nucleates assembly of the 50S subunit. In terms of biological role, one of the proteins that surrounds the polypeptide exit tunnel on the outside of the subunit. The polypeptide is Large ribosomal subunit protein uL24 (Actinobacillus pleuropneumoniae serotype 3 (strain JL03)).